Reading from the N-terminus, the 310-residue chain is Protein-L-isoaspartate O-methyltransferase (310 aa).

The disordered stretch occupies residues 1–41; sequence MSGERAKRFPLALEDLKRAPRKSEGRPGERQTAGAVPKAAD. Basic and acidic residues predominate over residues 14-29; that stretch reads EDLKRAPRKSEGRPGE. Residue S157 is part of the active site.

Belongs to the methyltransferase superfamily. L-isoaspartyl/D-aspartyl protein methyltransferase family.

The protein resides in the cytoplasm. The enzyme catalyses [protein]-L-isoaspartate + S-adenosyl-L-methionine = [protein]-L-isoaspartate alpha-methyl ester + S-adenosyl-L-homocysteine. Catalyzes the methyl esterification of L-isoaspartyl residues in peptides and proteins that result from spontaneous decomposition of normal L-aspartyl and L-asparaginyl residues. It plays a role in the repair and/or degradation of damaged proteins. The sequence is that of Protein-L-isoaspartate O-methyltransferase from Burkholderia cenocepacia (strain HI2424).